Here is a 289-residue protein sequence, read N- to C-terminus: MVLLAVGELSASLSLLEECWHYLFLGIIQGLTEFFPISSTAHLKVIPLLLSWDDPGVAVTASLQLGSIIALIAYFWNDLAFLMRGISKASFQNSWNNQNTKLASAIVLGTLPIVFAGMLIKLFWQGYETSPIRSIPAIAVVSIVMALLLLIAENVGRRTRNFENLSFWDGQIIGFSQVLALIPGVSRSGITITTALMIGWERKSAARFSFLLGIPAITLAGLVELKQAFGSFELVDVFPLLLGITSSAISSWIAIDCLMKFLQTQSMMIFITYRFLFGTLLLFWYYLAF.

8 helical membrane passes run Leu-23–Leu-43, Gly-56–Trp-76, Ser-104–Trp-124, Ile-135–Val-155, Leu-165–Val-185, Phe-210–Gly-230, Val-235–Ile-255, and Ile-269–Phe-289.

It belongs to the UppP family.

It is found in the cell inner membrane. It catalyses the reaction di-trans,octa-cis-undecaprenyl diphosphate + H2O = di-trans,octa-cis-undecaprenyl phosphate + phosphate + H(+). Catalyzes the dephosphorylation of undecaprenyl diphosphate (UPP). Confers resistance to bacitracin. This is Undecaprenyl-diphosphatase from Prochlorococcus marinus (strain SARG / CCMP1375 / SS120).